Reading from the N-terminus, the 235-residue chain is UPF0749 protein YlxX (235 aa).

The chain crosses the membrane as a helical span at residues 6–26; the sequence is SFISISVLMVIFGLMISVQFN.

The protein belongs to the UPF0749 family.

The protein localises to the cell membrane. In Bacillus subtilis (strain 168), this protein is UPF0749 protein YlxX (ylxX).